A 365-amino-acid chain; its full sequence is Flagellar P-ring protein (365 aa).

The signal sequence occupies residues 1–19; sequence MIKFLSALILLLVTTAAQA.

It belongs to the FlgI family. In terms of assembly, the basal body constitutes a major portion of the flagellar organelle and consists of four rings (L,P,S, and M) mounted on a central rod.

It localises to the periplasm. It is found in the bacterial flagellum basal body. Its function is as follows. Assembles around the rod to form the L-ring and probably protects the motor/basal body from shearing forces during rotation. This Shigella boydii serotype 4 (strain Sb227) protein is Flagellar P-ring protein.